The chain runs to 949 residues: MAM domain-containing glycosylphosphatidylinositol anchor protein 2 (949 aa).

An N-terminal signal peptide occupies residues 1-25 (MDLVYGLVWLLTVLLEGISGQGVYA). Ig-like domains follow at residues 27–127 (PTVR…IRVD) and 134–232 (PVVT…KMVS). 2 disulfides stabilise this stretch: cysteine 62–cysteine 110 and cysteine 159–cysteine 216. N-linked (GlcNAc...) asparagine glycosylation is found at asparagine 92, asparagine 213, and asparagine 237. 4 consecutive Ig-like domains span residues 242–328 (PSIK…NIIV), 340–436 (PDPY…VNIS), 442–533 (PNLT…ALVQ), and 540–627 (PAVE…FLVT). 2 disulfides stabilise this stretch: cysteine 264-cysteine 310 and cysteine 359-cysteine 417. 5 N-linked (GlcNAc...) asparagine glycosylation sites follow: asparagine 434, asparagine 443, asparagine 504, asparagine 610, and asparagine 703. Disulfide bonds link cysteine 465–cysteine 515 and cysteine 561–cysteine 611. A Fibronectin type-III domain is found at 638–738 (DTYNPVWQNR…TIRVIKYTGE (101 aa)). Residues 739 to 914 (FHCGFEDGNI…VSIAEGECAK (176 aa)) enclose the MAM domain. Residue aspartate 924 is the site of GPI-anchor amidated aspartate attachment. The propeptide at 925 to 949 (GAVGILVHIWLFPVIILISILSPRR) is removed in mature form.

Interacts (through the Ig-like domains) with NLGN2. In terms of tissue distribution, expressed predominantly in neuronal tissue. Expressed in brain.

It is found in the cell membrane. May be involved in cell-cell interactions. This Rattus norvegicus (Rat) protein is MAM domain-containing glycosylphosphatidylinositol anchor protein 2 (Mdga2).